We begin with the raw amino-acid sequence, 446 residues long: Choline monooxygenase, chloroplastic (446 aa).

The transit peptide at 1–65 (MAASATTMLL…NTSTNKIITK (65 aa)) directs the protein to the chloroplast. Residues 127–234 (WQVAGYSEQV…VAEWGPFILI (108 aa)) form the Rieske domain. Residues C169, H171, C188, and H191 each contribute to the [2Fe-2S] cluster site. Fe cation-binding residues include H294 and H299.

Belongs to the choline monooxygenase family. Requires [2Fe-2S] cluster as cofactor. The cofactor is Fe cation. Mg(2+) is required as a cofactor. In terms of tissue distribution, expressed in roots and leaves.

The protein localises to the plastid. It localises to the chloroplast stroma. It catalyses the reaction choline + 2 reduced [2Fe-2S]-[ferredoxin] + O2 + 2 H(+) = betaine aldehyde hydrate + 2 oxidized [2Fe-2S]-[ferredoxin] + H2O. It participates in amine and polyamine biosynthesis; betaine biosynthesis via choline pathway; betaine aldehyde from choline (monooxygenase route): step 1/1. Catalyzes the first step of the osmoprotectant glycine betaine synthesis. This Beta vulgaris (Sugar beet) protein is Choline monooxygenase, chloroplastic (CMO).